The following is a 304-amino-acid chain: Glutaminase (304 aa).

Ser-63, Asn-114, Glu-158, Asn-165, Tyr-189, Tyr-240, and Val-258 together coordinate substrate.

It belongs to the glutaminase family. As to quaternary structure, homotetramer.

It carries out the reaction L-glutamine + H2O = L-glutamate + NH4(+). The protein is Glutaminase of Shewanella baltica (strain OS185).